The following is a 261-amino-acid chain: Hemin import ATP-binding protein HmuV (261 aa).

The ABC transporter domain occupies 8 to 243 (IRVTDLSYSV…ESIRTAYGHE (236 aa)). An ATP-binding site is contributed by 40–47 (GRNGAGKS).

This sequence belongs to the ABC transporter superfamily. Heme (hemin) importer (TC 3.A.1.14.5) family. As to quaternary structure, the complex is composed of two ATP-binding proteins (HmuV), two transmembrane proteins (HmuU) and a solute-binding protein (HmuT).

It localises to the cell membrane. Functionally, part of the ABC transporter complex HmuTUV involved in hemin import. Responsible for energy coupling to the transport system. The protein is Hemin import ATP-binding protein HmuV of Deinococcus radiodurans (strain ATCC 13939 / DSM 20539 / JCM 16871 / CCUG 27074 / LMG 4051 / NBRC 15346 / NCIMB 9279 / VKM B-1422 / R1).